We begin with the raw amino-acid sequence, 320 residues long: 3-O-acetylpapaveroxine carboxylesterase CXE1 (320 aa).

The Involved in the stabilization of the negatively charged intermediate by the formation of the oxyanion hole motif lies at 72-74 (HGG). Residues Ser-158, Asp-262, and His-292 contribute to the active site.

It belongs to the 'GDXG' lipolytic enzyme family.

It catalyses the reaction 3-O-acetylpapaveroxine + H2O = narcotine hemiacetal + acetate + H(+). The protein operates within alkaloid biosynthesis. Carboxylesterase involved in the biosynthesis of the benzylisoquinoline alkaloid noscapine. Converts 3-O-acetylpapaveroxine to papaveroxine which spontaneously rearranges to narcotine hemiacetal. The protein is 3-O-acetylpapaveroxine carboxylesterase CXE1 of Papaver somniferum (Opium poppy).